We begin with the raw amino-acid sequence, 121 residues long: Small ribosomal subunit protein bS6 (121 aa).

This sequence belongs to the bacterial ribosomal protein bS6 family.

Binds together with bS18 to 16S ribosomal RNA. This chain is Small ribosomal subunit protein bS6 (rpsF), found in Rickettsia prowazekii (strain Madrid E).